The following is a 926-amino-acid chain: Ubiquitin carboxyl-terminal hydrolase 4 (926 aa).

Residues 205–328 (SQMEILLIDI…WLKSNYGRQV (124 aa)) enclose the Rhodanese domain. S443 is subject to Phosphoserine. The region spanning 562-923 (VGLENLGNSC…NAYVLFYHRV (362 aa)) is the USP domain. C571 functions as the Nucleophile in the catalytic mechanism. H880 functions as the Proton acceptor in the catalytic mechanism.

Belongs to the peptidase C19 family. As to quaternary structure, interacts with BRO1, RFU1 and VPS32. Associates with the 26S proteasome.

It localises to the cytoplasm. The protein localises to the late endosome membrane. It carries out the reaction Thiol-dependent hydrolysis of ester, thioester, amide, peptide and isopeptide bonds formed by the C-terminal Gly of ubiquitin (a 76-residue protein attached to proteins as an intracellular targeting signal).. With respect to regulation, RFU1 is an inhibitor of deubiquitination activity. Its function is as follows. Ubiquitin thioesterase that acts at the late endosome/prevacuolar compartment to recover ubiquitin from ubiquitinated membrane proteins en route to the vacuole. Also removes ubiquitin from soluble proteins targeted to proteasomes. Is essential to maintain a normal level of free ubiquitin. Involved in the ammonium-induced down-regulation of the GAP1 permease and the UME3 destruction in response to oxidative stress. Has a role in the RAD9 checkpoint response to TOP1 poisons. Required for promoting coordination of DNA replication and avoids DNA overreplication. This is Ubiquitin carboxyl-terminal hydrolase 4 (DOA4) from Saccharomyces cerevisiae (strain ATCC 204508 / S288c) (Baker's yeast).